The following is a 267-amino-acid chain: Ribosomal RNA small subunit methyltransferase A (267 aa).

The S-adenosyl-L-methionine site is built by Leu20, Gly45, Glu68, Asp91, and Asn113.

This sequence belongs to the class I-like SAM-binding methyltransferase superfamily. rRNA adenine N(6)-methyltransferase family. RsmA subfamily.

It localises to the cytoplasm. It catalyses the reaction adenosine(1518)/adenosine(1519) in 16S rRNA + 4 S-adenosyl-L-methionine = N(6)-dimethyladenosine(1518)/N(6)-dimethyladenosine(1519) in 16S rRNA + 4 S-adenosyl-L-homocysteine + 4 H(+). Functionally, specifically dimethylates two adjacent adenosines (A1518 and A1519) in the loop of a conserved hairpin near the 3'-end of 16S rRNA in the 30S particle. May play a critical role in biogenesis of 30S subunits. In Blochmanniella pennsylvanica (strain BPEN), this protein is Ribosomal RNA small subunit methyltransferase A.